Reading from the N-terminus, the 534-residue chain is MHHQTKLDVFIIRAYNLLSNESVISGASLQSVTNSPQTTTNTPSGMVNGAVGTGIANPTGLMGSDSTPNIDEIITSTGSNALTKTNSDSANGTPNGNSSSTSAISNASNPATTGNNASSSATSNGIYTQAQYSQLFAKISKLYNATLSSGSIDDRSTSPKSAIELYQRFQQMIKELELSFDASPYAKYFRRLDGRLWQIKTDSELENDELWRLVSMSIFTVFDPQTGQILTQGRRKGNSLNTSTKGSPSDLQGINNGNNNGNNGNIGNGSNIKNYGNKNMPNNRTKKRGTRVAKNAKNGKNNKNSNKERNGITDTSAFSNTTISNPGTNMLFDPSLSQQLQKRLQTLSQDVNSRSLTGYYTQPTSPGSGGFEFGLSHADLNPNASSNTMGYNTMSNNGSHSWKRRSLGSLDVNTLDDEAVEELLQLTNTSKRQRPMTTAAEGALINDGPDTNLNANNTQMKVDLNPSNSMGPIDTEAVIRPLKEAYDAIISEKGQRIVQLERELELQRQETQWLRKMLIEDMGCVRSMLRDLQR.

The interval 29–122 (LQSVTNSPQT…TGNNASSSAT (94 aa)) is disordered. Over residues 30–43 (QSVTNSPQTTTNTP) the composition is skewed to low complexity. The segment covering 64–88 (SDSTPNIDEIITSTGSNALTKTNSD) has biased composition (polar residues). Residues 89 to 122 (SANGTPNGNSSSTSAISNASNPATTGNNASSSAT) show a composition bias toward low complexity. The residue at position 151 (Ser-151) is a Phosphoserine. Residues 230–333 (LTQGRRKGNS…SNPGTNMLFD (104 aa)) are disordered. Residues 238 to 252 (NSLNTSTKGSPSDLQ) are compositionally biased toward polar residues. The segment covering 253–279 (GINNGNNNGNNGNIGNGSNIKNYGNKN) has biased composition (low complexity). A Nuclear localization signal motif is present at residues 281 to 288 (PNNRTKKR). Over residues 295–304 (NAKNGKNNKN) the composition is skewed to low complexity. The span at 312–328 (ITDTSAFSNTTISNPGT) shows a compositional bias: polar residues. Phosphoserine occurs at positions 406 and 409. Residues 497-534 (IVQLERELELQRQETQWLRKMLIEDMGCVRSMLRDLQR) are leucine-zipper.

Homodimer via the leucine-zipper domain. Forms a complex with a GCR1 homodimer.

It is found in the nucleus. Functionally, transcriptional activator required for the expression of glycolytic genes. Enhances the CT box-dependent transcriptional activation of a RAP1-GCR1 complex. Required for GCR1 phosphorylation. The polypeptide is Glycolytic genes transcriptional activator GCR2 (GCR2) (Saccharomyces cerevisiae (strain ATCC 204508 / S288c) (Baker's yeast)).